Here is a 170-residue protein sequence, read N- to C-terminus: Cathelicidin antimicrobial peptide (170 aa).

An N-terminal signal peptide occupies residues 1 to 30 (MKTQRDGPSLGRWSLVLLLLGLTMPLAITA). The propeptide at 31–131 (QVLSYQEAVL…DISCDKDERK (101 aa)) is cathelin-like domain (CLD). Disulfide bonds link Cys-86-Cys-97 and Cys-108-Cys-125. Residues 150–162 (FKKIGQKINDFLG) form an active core region.

It belongs to the cathelicidin family. Monomer, homodimer or homotrimer (in vitro). Oligomerizes as tetra- or hexamer in solution (in vitro). Post-translationally, proteolytically cleaved by proteinase PRTN3 into antibacterial peptide LL-37. Proteolytically cleaved by cathepsin CTSG and neutrophil elastase ELANE. Resistant to proteolytic degradation in solution, and when bound to both zwitterionic (mimicking mammalian membranes) and negatively charged membranes (mimicking bacterial membranes). In terms of processing, after secretion onto the skin surface, the CAMP gene product is processed by a serine protease-dependent mechanism into multiple novel antimicrobial peptides distinct from and shorter than cathelicidin LL-37. These peptides show enhanced antimicrobial action, acquiring the ability to kill skin pathogens such as S.aureus, E.coli and C.albicans. These peptides have lost the ability to stimulate CXCL8/IL8 release from keratinocytes. The peptides act synergistically, killing bacteria at lower concentrations when present together, and maintain activity at increased salt condition.

Its subcellular location is the secreted. It localises to the vesicle. In terms of biological role, antimicrobial protein that is an integral component of the innate immune system. Binds to bacterial lipopolysaccharides (LPS). Acts via neutrophil N-formyl peptide receptors to enhance the release of CXCL2. Postsecretory processing generates multiple cathelicidin antimicrobial peptides with various lengths which act as a topical antimicrobial defense in sweat on skin. The unprocessed precursor form, cathelicidin antimicrobial peptide, inhibits the growth of Gram-negative E.coli and E.aerogenes with efficiencies comparable to that of the mature peptide LL-37 (in vitro). Its function is as follows. Antimicrobial peptide that is an integral component of the innate immune system. Binds to bacterial lipopolysaccharides (LPS). Causes membrane permeabilization by forming transmembrane pores (in vitro). Causes lysis of E.coli. Exhibits antimicrobial activity against Gram-negative bacteria such as P.aeruginosa, S.typhimurium, E.aerogenes, E.coli and P.syringae, Gram-positive bacteria such as L.monocytogenes, S.epidermidis, S.pyogenes and S.aureus, as well as vancomycin-resistant enterococci (in vitro). Exhibits antimicrobial activity against methicillin-resistant S.aureus, P.mirabilis, and C.albicans in low-salt media, but not in media containing 100 mM NaCl (in vitro). Forms chiral supramolecular assemblies with quinolone signal (PQS) molecules of P.aeruginosa, which may lead to interference of bacterial quorum signaling and perturbance of bacterial biofilm formation. May form supramolecular fiber-like assemblies on bacterial membranes. Induces cytokine and chemokine producation as well as TNF/TNFA and CSF2/GMCSF production in normal human keratinocytes. Exhibits hemolytic activity against red blood cells. Exhibits antimicrobial activity against E.coli and B.megaterium (in vitro). The protein is Cathelicidin antimicrobial peptide of Cebus capucinus (White-faced sapajou).